Here is a 733-residue protein sequence, read N- to C-terminus: Hexamerin (733 aa).

The N-terminal stretch at Met1–Ala17 is a signal peptide. Residues Asn199, Asn234, and Asn431 are each glycosylated (N-linked (GlcNAc...) asparagine).

This sequence belongs to the hemocyanin family. Homohexamer.

Its subcellular location is the secreted. The protein resides in the extracellular space. Its function is as follows. Larval storage protein (LSP) which may serve as a store of amino acids for synthesis of adult proteins. This is Hexamerin from Blaberus discoidalis (Tropical cockroach).